A 35-amino-acid polypeptide reads, in one-letter code: uncharacterized protein (35 aa).

This is an uncharacterized protein from Bacillus subtilis (strain 168).